Consider the following 64-residue polypeptide: MPKAKTHSGASKRFRRTGTGKIVRQKANRRHLMEHKPTKRTRRLAGRTQVSANDAPRINKMLNG.

Disordered regions lie at residues 1-20 (MPKAKTHSGASKRFRRTGTG) and 37-64 (PTKRTRRLAGRTQVSANDAPRINKMLNG).

This sequence belongs to the bacterial ribosomal protein bL35 family.

This Mycobacterium sp. (strain JLS) protein is Large ribosomal subunit protein bL35.